The primary structure comprises 131 residues: DNA-binding protein inhibitor ID-4 (131 aa).

A bHLH domain is found at 36–88; it reads ARYKMEEEETLCLQYDMNDCYSRLKRLVPTIPPNKKVSKVEILQHVIDYILDL.

In terms of assembly, heterodimer with other HLH proteins. As to expression, during embryonic development, expressed in a number of neural tissues, including Rohon-Beard neurons, olfactory placode, eye primordia, and the trigeminal ganglia. Also expressed in other organs including the pronephros and liver primordium. Pronephric development begins by stage 25 and increases during tailbud stages. Expressed in both the tubules and the duct. As embryogenesis progresses, expressed in the migrating melanocytes and lateral line structures.

The protein localises to the nucleus. In terms of biological role, transcriptional regulator (lacking a basic DNA binding domain) which negatively regulates the basic helix-loop-helix (bHLH) transcription factors by forming heterodimers and inhibiting their DNA binding and transcriptional activity. Inhibits the activity of both neurogenic (neurog1/neurogenin, neurod1/neuroD) and myogenic (myod1/myoD) bHLH factors. This Xenopus laevis (African clawed frog) protein is DNA-binding protein inhibitor ID-4.